Reading from the N-terminus, the 180-residue chain is Endogenous alpha-amylase/subtilisin inhibitor (180 aa).

2 disulfides stabilise this stretch: cysteine 42/cysteine 89 and cysteine 143/cysteine 147.

The protein belongs to the protease inhibitor I3 (leguminous Kunitz-type inhibitor) family.

In terms of biological role, inhibitor of endogenous alpha-amylase (wheat also produces an exogenous inhibitor which inactivates alpha-amylase from animal and insect origin). This inhibitor can also inhibit subtilisin. The polypeptide is Endogenous alpha-amylase/subtilisin inhibitor (Triticum aestivum (Wheat)).